The following is a 102-amino-acid chain: Virulence plasmid protein pGP4-D (102 aa).

The polypeptide is Virulence plasmid protein pGP4-D (Chlamydia trachomatis serovar L2 (strain ATCC VR-902B / DSM 19102 / 434/Bu)).